The following is a 258-amino-acid chain: RBPJ-interacting and tubulin-associated protein 1 (258 aa).

Disordered stretches follow at residues 28–86 (FGSP…PRKK), 132–182 (TPPA…APRS), and 195–258 (AVPS…PPWK). The span at 71–81 (SPSSRGSTPNL) shows a compositional bias: polar residues. Positions 81–97 (LTPRKKNKYRLIGHTPS) match the Nuclear localization signal motif. Residues 117–145 (RTAVEDAAKLRTLFWTPPATPRGSHSPRP) are interaction with RBPJ/RBPSUH. Positions 145–258 (PRETPLRAIH…CPQKPKPPWK (114 aa)) are interaction with tubulin. Polar residues-rich tracts occupy residues 201-212 (HPASTAPQTNGP) and 236-245 (GSVSGPTTPQ).

Belongs to the RITA family. In terms of assembly, interacts with RBPJ/RBPSUH.

Its subcellular location is the cytoplasm. The protein resides in the nucleus. It is found in the cytoskeleton. The protein localises to the microtubule organizing center. It localises to the centrosome. Its function is as follows. Tubulin-binding protein that acts as a negative regulator of Notch signaling pathway. Shuttles between the cytoplasm and the nucleus and mediates the nuclear export of RBPJ/RBPSUH, thereby preventing the interaction between RBPJ/RBPSUH and NICD product of Notch proteins (Notch intracellular domain), leading to down-regulate Notch-mediated transcription. May play a role in neurogenesis. This Rattus norvegicus (Rat) protein is RBPJ-interacting and tubulin-associated protein 1 (Rita1).